A 302-amino-acid chain; its full sequence is Acetylesterase (302 aa).

The N-terminal stretch at 1–21 is a signal peptide; that stretch reads MGRFLTTTALALLATGGAATA. 2 N-linked (GlcNAc...) asparagine glycosylation sites follow: N84 and N101.

The protein belongs to the carbohydrate esterase CE16 family.

The protein resides in the secreted. The catalysed reaction is an acetyl ester + H2O = an aliphatic alcohol + acetate + H(+). Its function is as follows. Acetyl esterase that acts as an exo-deacetylase. Liberates acetic acid from xylo-oligomers. The chain is Acetylesterase from Thermothelomyces thermophilus (Myceliophthora thermophila).